Consider the following 258-residue polypeptide: tRNA pseudouridine synthase A (258 aa).

Catalysis depends on D52, which acts as the Nucleophile. Y110 contributes to the substrate binding site.

This sequence belongs to the tRNA pseudouridine synthase TruA family. As to quaternary structure, homodimer.

The enzyme catalyses uridine(38/39/40) in tRNA = pseudouridine(38/39/40) in tRNA. In terms of biological role, formation of pseudouridine at positions 38, 39 and 40 in the anticodon stem and loop of transfer RNAs. This is tRNA pseudouridine synthase A from Francisella tularensis subsp. mediasiatica (strain FSC147).